Here is a 253-residue protein sequence, read N- to C-terminus: 2-C-methyl-D-erythritol 4-phosphate cytidylyltransferase (253 aa).

A disordered region spans residues 1–28 (MSVSSRPGRRRFALIPSAGTGTRAGGDL).

The protein belongs to the IspD/TarI cytidylyltransferase family. IspD subfamily.

It carries out the reaction 2-C-methyl-D-erythritol 4-phosphate + CTP + H(+) = 4-CDP-2-C-methyl-D-erythritol + diphosphate. The protein operates within isoprenoid biosynthesis; isopentenyl diphosphate biosynthesis via DXP pathway; isopentenyl diphosphate from 1-deoxy-D-xylulose 5-phosphate: step 2/6. Catalyzes the formation of 4-diphosphocytidyl-2-C-methyl-D-erythritol from CTP and 2-C-methyl-D-erythritol 4-phosphate (MEP). The sequence is that of 2-C-methyl-D-erythritol 4-phosphate cytidylyltransferase from Ralstonia nicotianae (strain ATCC BAA-1114 / GMI1000) (Ralstonia solanacearum).